A 491-amino-acid polypeptide reads, in one-letter code: Phosphatidylglycerol--prolipoprotein diacylglyceryl transferase (491 aa).

The next 3 helical transmembrane spans lie at 24–44 (IPLR…IWWG), 58–78 (VLDV…AYHV), and 98–118 (IWQG…GAWI). Arg146 provides a ligand contact to a 1,2-diacyl-sn-glycero-3-phospho-(1'-sn-glycerol). The next 2 helical transmembrane spans lie at 192–212 (IVHP…IALV) and 256–276 (INNF…VFAT). Residues 309–323 (NGPAEPGATASTATD) are compositionally biased toward low complexity. A disordered region spans residues 309-491 (NGPAEPGATA…DRVDSGENDA (183 aa)). A compositionally biased stretch (basic and acidic residues) spans 347–360 (KGDRGTADAADTAK). Composition is skewed to low complexity over residues 361-387 (DASA…GSSD), 394-406 (AVKA…AAEK), and 415-438 (AGEA…SAKS). The segment covering 453-462 (NESESTRDNE) has biased composition (basic and acidic residues). Residues 463-481 (STSAGTAASATGSAGAGAT) show a composition bias toward low complexity. The span at 482–491 (DRVDSGENDA) shows a compositional bias: basic and acidic residues.

Belongs to the Lgt family.

The protein localises to the cell membrane. It catalyses the reaction L-cysteinyl-[prolipoprotein] + a 1,2-diacyl-sn-glycero-3-phospho-(1'-sn-glycerol) = an S-1,2-diacyl-sn-glyceryl-L-cysteinyl-[prolipoprotein] + sn-glycerol 1-phosphate + H(+). Its pathway is protein modification; lipoprotein biosynthesis (diacylglyceryl transfer). Functionally, catalyzes the transfer of the diacylglyceryl group from phosphatidylglycerol to the sulfhydryl group of the N-terminal cysteine of a prolipoprotein, the first step in the formation of mature lipoproteins. The protein is Phosphatidylglycerol--prolipoprotein diacylglyceryl transferase of Nocardia farcinica (strain IFM 10152).